Here is a 180-residue protein sequence, read N- to C-terminus: ADP-ribosylation factor 1 (180 aa).

Gly2 carries the N-myristoyl glycine lipid modification. Residues 24–31 (GLDAAGKT), 67–71 (DVGGQ), and 126–129 (NKQD) contribute to the GTP site.

The protein belongs to the small GTPase superfamily. Arf family.

The protein localises to the golgi apparatus. The enzyme catalyses GTP + H2O = GDP + phosphate + H(+). Functionally, GTP-binding protein involved in protein trafficking; may modulate vesicle budding and uncoating within the Golgi apparatus. This is ADP-ribosylation factor 1 (arf1) from Schizosaccharomyces pombe (strain 972 / ATCC 24843) (Fission yeast).